Here is a 152-residue protein sequence, read N- to C-terminus: Prostaglandin E synthase (152 aa).

Residues 1–12 (MPAHSLVMSSPA) are Lumenal-facing. Residues 13 to 41 (LPAFLLCSTLLVIKMYVVAIITGQVRLRK) form a helical membrane-spanning segment. Arg38 contributes to the glutathione binding site. The Cytoplasmic segment spans residues 42-60 (KAFANPEDALRHGGPQYCR). A helical transmembrane segment spans residues 61 to 90 (SDPDVERCLRAHRNDMETIYPFLFLGFVYS). Glutathione is bound at residue 73-77 (RNDME). The Lumenal segment spans residues 91-95 (FLGPN). Residues 96–119 (PFVAWMHFLVFLVGRVAHTVAYLG) form a helical membrane-spanning segment. His113 and Tyr117 together coordinate glutathione. Topologically, residues 120–123 (KLRA) are cytoplasmic. The chain crosses the membrane as a helical span at residues 124–152 (PIRSVTYTLAQLPCASMALQILWEAARHL). 126–130 (RSVTY) lines the glutathione pocket.

The protein belongs to the MAPEG family. Homotrimer. Glutathione serves as cofactor.

It is found in the membrane. Its subcellular location is the cytoplasm. The protein resides in the perinuclear region. The catalysed reaction is prostaglandin H2 = prostaglandin E2. It carries out the reaction 2-glyceryl-prostaglandin H2 = 2-glyceryl-prostaglandin E2. The enzyme catalyses prostaglandin G2 = (15S)-15-hydroperoxy-prostaglandin E2. It catalyses the reaction 1-chloro-2,4-dinitrobenzene + glutathione = 2,4-dinitrophenyl-S-glutathione + chloride + H(+). The catalysed reaction is (5S)-hydroperoxy-(6E,8Z,11Z,14Z)-eicosatetraenoate + 2 glutathione = (5S)-hydroxy-(6E,8Z,11Z,14Z)-eicosatetraenoate + glutathione disulfide + H2O. Its pathway is lipid metabolism; prostaglandin biosynthesis. Induced by interleukin IL1B. In terms of biological role, terminal enzyme of the cyclooxygenase (COX)-2-mediated prostaglandin E2 (PGE2) biosynthetic pathway. Catalyzes the glutathione-dependent oxidoreduction of prostaglandin endoperoxide H2 (PGH2) to prostaglandin E2 (PGE2) in response to inflammatory stimuli. Plays a key role in inflammation response, fever and pain. Also catalyzes the oxidoreduction of endocannabinoids into prostaglandin glycerol esters and PGG2 into 15-hydroperoxy-PGE2. In addition, displays low glutathione transferase and glutathione-dependent peroxidase activities, toward 1-chloro-2,4-dinitrobenzene and 5-hydroperoxyicosatetraenoic acid (5-HPETE), respectively. This Homo sapiens (Human) protein is Prostaglandin E synthase (PTGES).